The chain runs to 241 residues: Small ribosomal subunit protein uS2 (241 aa).

This sequence belongs to the universal ribosomal protein uS2 family.

The chain is Small ribosomal subunit protein uS2 from Erwinia tasmaniensis (strain DSM 17950 / CFBP 7177 / CIP 109463 / NCPPB 4357 / Et1/99).